Here is a 408-residue protein sequence, read N- to C-terminus: Succinylornithine transaminase (408 aa).

Lys252 is modified (N6-(pyridoxal phosphate)lysine).

The protein belongs to the class-III pyridoxal-phosphate-dependent aminotransferase family. AstC subfamily. Pyridoxal 5'-phosphate serves as cofactor.

It catalyses the reaction N(2)-succinyl-L-ornithine + 2-oxoglutarate = N-succinyl-L-glutamate 5-semialdehyde + L-glutamate. The protein operates within amino-acid degradation; L-arginine degradation via AST pathway; L-glutamate and succinate from L-arginine: step 3/5. In terms of biological role, catalyzes the transamination of N(2)-succinylornithine and alpha-ketoglutarate into N(2)-succinylglutamate semialdehyde and glutamate. Can also act as an acetylornithine aminotransferase. In Salmonella enteritidis PT4 (strain P125109), this protein is Succinylornithine transaminase.